We begin with the raw amino-acid sequence, 334 residues long: Transcription factor TGA2.1 (334 aa).

Residues 1-13 are compositionally biased toward polar residues; the sequence is MADASSRTDTSIV. The segment at 1–49 is disordered; sequence MADASSRTDTSIVVDNDDKNHQLENGHSGAVMASNSSDRSDRSDKLMDQ. Residues 38-49 are compositionally biased toward basic and acidic residues; it reads DRSDRSDKLMDQ. The bZIP domain occupies 48–92; that stretch reads DQKTIRRLAQNREAARKSRLRKKAYVQQLESSKLKLAQLEQELQK. Residues 50–70 are basic motif; sequence KTIRRLAQNREAARKSRLRKK. The interval 76–90 is leucine-zipper; sequence LESSKLKLAQLEQEL. Positions 115–331 constitute a DOG1 domain; that stretch reads ALTFDLEYTR…RALSSLWLAR (217 aa).

This sequence belongs to the bZIP family. Interacts with NPR1/NH1 and NPR3/NH3.

The protein localises to the nucleus. In terms of biological role, plays a negative role in rice basal defense responses to the bacterial blight pathogen Xanthomomas oryzae pv. oryzae (Xoo). May function in both positive and negative regulation of rice defense genes. Binds DNA in vitro. Acts as a transcriptional activator when bound to NPR1/NH1 in vitro. Binds to the promoter sequence of CRK10 in vitro. In Oryza sativa subsp. japonica (Rice), this protein is Transcription factor TGA2.1.